The chain runs to 225 residues: T4 protein (225 aa).

It belongs to the poxviruses B9 family.

This Rabbit fibroma virus (strain Kasza) (RFV) protein is T4 protein.